The following is a 429-amino-acid chain: MTEQSAKLTWGEKTVDLPVKTGTIGPSVIDIGALYKNTSTFTYDPGFTSTASCESSITFIDGDEGVLLHRGYPIEQLAEHGDFLEVCYLLLYGELPTAAQKKDFDYRVVHHTMVHEQMSRFFTGFRRDAHPMAVMCGCVGALSAFYHDSTDITDPHQRMVASLRMIAKMPTLAAMAYKYHIGQPFVYPKNDLDYASNFLRMCFAVPCEEYVVNPVLARAMDRIFILHADHEQNASTSTVRLAGSSGANPFACIAAGIACLWGPAHGGANEAALNMLTEIGTVDRIPEYIARAKDKNDPFRLMGFGHRVYKNYDPRAKIMQKTAHEVLGELGIKDDPLLDIAIELERIALTDDYFIEKKLYPNVDFYSGITLKALGFPTTMFTVLFALARTVGWIAQWNEMIEDPDQRIGRPRHVYTGAPLREYVPVSKR.

Active-site residues include His306 and Asp364.

This sequence belongs to the citrate synthase family.

It carries out the reaction oxaloacetate + acetyl-CoA + H2O = citrate + CoA + H(+). The protein operates within carbohydrate metabolism; tricarboxylic acid cycle; isocitrate from oxaloacetate: step 1/2. This is Citrate synthase, chromosomal (ccsA) from Rhizobium tropici.